A 506-amino-acid polypeptide reads, in one-letter code: MTQAVMLQGTASDVGKSVLAAGLCRIFYQDGLRTAPFKSQNMALNSGITPDGKEMGRAQIFQAEAAGITPDVRMNPVLLKPTSDRQAQVVLMGKVATNMDAVSYHDYKPRLREQILAVYNSLAQEYDVIVLEGAGSPAEINLRDRDIVNMGMAEMAQCPVILVADIDRGGVFAAIYGTLALLHKQERDRVKGVIINKFRGDVALLYSGIEQIESLTGVPVLGVMPWLDVDLEDEDGVALQNDKYRGNAPRDITIAIVQLPHISNFTDFNALAAQPDVRIRYIRRPEALTDVDLVILPGSKNTLSDLAWLRESGMADAVLQTHRQGVPVMGICGGYQMLGDTIVDEVESGLGTQPGLGLLNTITRFAQDKTTTQVNATMSGELPGWLAAAAGLPVRGYEIHMGETVLQEGCCTAMTLQKNGCSVADGAVTADGLAFGTYLHGLFDSDAFTRAVVNGLRARKGLAPWETTFCYADHKARQFDLLAEAMRQHIDIDKIYTIMQQHQEPV.

In terms of domain architecture, GATase cobBQ-type spans 251–448 (DITIAIVQLP…LHGLFDSDAF (198 aa)). Catalysis depends on C332, which acts as the Nucleophile. H440 is an active-site residue.

Belongs to the CobB/CobQ family. CobQ subfamily. Homodimer.

Its pathway is cofactor biosynthesis; adenosylcobalamin biosynthesis. In terms of biological role, catalyzes amidations at positions B, D, E, and G on adenosylcobyrinic A,C-diamide. NH(2) groups are provided by glutamine, and one molecule of ATP is hydrogenolyzed for each amidation. The polypeptide is Cobyric acid synthase (cbiP) (Salmonella typhimurium (strain LT2 / SGSC1412 / ATCC 700720)).